We begin with the raw amino-acid sequence, 603 residues long: Penicillin-binding protein activator LpoA (603 aa).

The signal sequence occupies residues 1–26 (MAMNHHQRRSVPRLLTPIALSIVLSA). Cys-27 carries the N-palmitoyl cysteine lipid modification. A lipid anchor (S-diacylglycerol cysteine) is attached at Cys-27.

This sequence belongs to the LpoA family. As to quaternary structure, interacts with PBP1a.

The protein localises to the cell outer membrane. Functionally, regulator of peptidoglycan synthesis that is essential for the function of penicillin-binding protein 1A (PBP1a). This Vibrio cholerae serotype O1 (strain ATCC 39541 / Classical Ogawa 395 / O395) protein is Penicillin-binding protein activator LpoA.